The chain runs to 290 residues: 4-hydroxy-tetrahydrodipicolinate synthase (290 aa).

T44 provides a ligand contact to pyruvate. The active-site Proton donor/acceptor is Y132. Residue K160 is the Schiff-base intermediate with substrate of the active site. Pyruvate is bound at residue I202.

The protein belongs to the DapA family. In terms of assembly, homotetramer; dimer of dimers.

The protein localises to the cytoplasm. The catalysed reaction is L-aspartate 4-semialdehyde + pyruvate = (2S,4S)-4-hydroxy-2,3,4,5-tetrahydrodipicolinate + H2O + H(+). It functions in the pathway amino-acid biosynthesis; L-lysine biosynthesis via DAP pathway; (S)-tetrahydrodipicolinate from L-aspartate: step 3/4. Catalyzes the condensation of (S)-aspartate-beta-semialdehyde [(S)-ASA] and pyruvate to 4-hydroxy-tetrahydrodipicolinate (HTPA). This is 4-hydroxy-tetrahydrodipicolinate synthase from Geobacter metallireducens (strain ATCC 53774 / DSM 7210 / GS-15).